The sequence spans 202 residues: Succinate dehydrogenase cytochrome b558 subunit (202 aa).

Helical transmembrane passes span 12-31, 60-79, 93-113, 135-155, and 178-196; these read LHSL…HLVV, IFII…YIAF, NWLF…VSWH, ILSS…TIFH, and ISTY…VGLK. 4 residues coordinate heme: His-28, His-70, His-113, and His-155.

This sequence belongs to the cytochrome b558 family. Part of an enzyme complex containing three subunits: a flavoprotein, an iron-sulfur protein and cytochrome b-558.

It localises to the cell membrane. The protein operates within carbohydrate metabolism; tricarboxylic acid cycle. Di-heme cytochrome of the succinate dehydrogenase complex. This chain is Succinate dehydrogenase cytochrome b558 subunit (sdhC), found in Bacillus subtilis (strain 168).